A 172-amino-acid chain; its full sequence is NADH-quinone oxidoreductase subunit B (172 aa).

The [4Fe-4S] cluster site is built by Cys52, Cys53, Cys117, and Cys147.

It belongs to the complex I 20 kDa subunit family. As to quaternary structure, NDH-1 is composed of 14 different subunits. Subunits NuoB, C, D, E, F, and G constitute the peripheral sector of the complex. It depends on [4Fe-4S] cluster as a cofactor.

The protein localises to the cell inner membrane. The enzyme catalyses a quinone + NADH + 5 H(+)(in) = a quinol + NAD(+) + 4 H(+)(out). Functionally, NDH-1 shuttles electrons from NADH, via FMN and iron-sulfur (Fe-S) centers, to quinones in the respiratory chain. Couples the redox reaction to proton translocation (for every two electrons transferred, four hydrogen ions are translocated across the cytoplasmic membrane), and thus conserves the redox energy in a proton gradient. The sequence is that of NADH-quinone oxidoreductase subunit B from Ehrlichia ruminantium (strain Gardel).